A 455-amino-acid chain; its full sequence is tRNA-2-methylthio-N(6)-dimethylallyladenosine synthase (455 aa).

An MTTase N-terminal domain is found at 10 to 130 (RKVFIKTYGC…LPDALKRVRR (121 aa)). Cys19, Cys55, Cys93, Cys171, Cys175, and Cys178 together coordinate [4Fe-4S] cluster. In terms of domain architecture, Radical SAM core spans 157 to 389 (RSRGVTAFLT…QALLLRQQKE (233 aa)). A TRAM domain is found at 392-454 (ESLVGKTMDV…PNSLFAEVAG (63 aa)).

The protein belongs to the methylthiotransferase family. MiaB subfamily. As to quaternary structure, monomer. [4Fe-4S] cluster is required as a cofactor.

The protein localises to the cytoplasm. The catalysed reaction is N(6)-dimethylallyladenosine(37) in tRNA + (sulfur carrier)-SH + AH2 + 2 S-adenosyl-L-methionine = 2-methylsulfanyl-N(6)-dimethylallyladenosine(37) in tRNA + (sulfur carrier)-H + 5'-deoxyadenosine + L-methionine + A + S-adenosyl-L-homocysteine + 2 H(+). Catalyzes the methylthiolation of N6-(dimethylallyl)adenosine (i(6)A), leading to the formation of 2-methylthio-N6-(dimethylallyl)adenosine (ms(2)i(6)A) at position 37 in tRNAs that read codons beginning with uridine. This is tRNA-2-methylthio-N(6)-dimethylallyladenosine synthase from Agrobacterium fabrum (strain C58 / ATCC 33970) (Agrobacterium tumefaciens (strain C58)).